A 133-amino-acid polypeptide reads, in one-letter code: Small ribosomal subunit protein uS9 (133 aa).

The segment covering 102-113 has biased composition (basic and acidic residues); the sequence is KVEGYLSRDPRA. Residues 102 to 133 are disordered; that stretch reads KVEGYLSRDPRAKERRKYGLKKARKAPQFSKR. A compositionally biased stretch (basic residues) spans 114–133; sequence KERRKYGLKKARKAPQFSKR.

It belongs to the universal ribosomal protein uS9 family.

In Gloeobacter violaceus (strain ATCC 29082 / PCC 7421), this protein is Small ribosomal subunit protein uS9.